The sequence spans 149 residues: Large ribosomal subunit protein uL13 (149 aa).

It belongs to the universal ribosomal protein uL13 family. Part of the 50S ribosomal subunit.

Its function is as follows. This protein is one of the early assembly proteins of the 50S ribosomal subunit, although it is not seen to bind rRNA by itself. It is important during the early stages of 50S assembly. The sequence is that of Large ribosomal subunit protein uL13 from Thermotoga maritima (strain ATCC 43589 / DSM 3109 / JCM 10099 / NBRC 100826 / MSB8).